The primary structure comprises 417 residues: MDKIEIRGGKRLTGEVRISGAKNAALPLLASSILVDGAMTFTNVPDLVDVRSIKMLLRDLGAGCEEGEGTVLIDGSGIHKIEAAYELVRKMRASILVLGPLVARFGHARVSLPGGCAIGARPVDMHLKGLKALGATITIENGYIEAKADRLKGNEIYFDIPTVTGTENLMMAATLAKGTTVLRNCAREPEITALANALNLMGARVTGAGTAVIRINGVDGLSPATIHVIPDRIEAGTFMVAAAATGGDVLVTGCEPENMGGIINKLRQTGALVEIIDHGVKVSGGKSILSTDIKTLPYPGFPTDMQAQFMVLMAISQGNSVIHETIFENRFMHVNELQRMGADISISGGNYAMVRGVNALSGAEVMASDLRASASLVIAGLVARGVTTIHRVYHIDRGYEALEKKFSALGADIKRVK.

22 to 23 (KN) is a binding site for phosphoenolpyruvate. Position 92 (R92) interacts with UDP-N-acetyl-alpha-D-glucosamine. The active-site Proton donor is the C116. The residue at position 116 (C116) is a 2-(S-cysteinyl)pyruvic acid O-phosphothioketal. Residues D304 and I326 each contribute to the UDP-N-acetyl-alpha-D-glucosamine site.

This sequence belongs to the EPSP synthase family. MurA subfamily.

It localises to the cytoplasm. The catalysed reaction is phosphoenolpyruvate + UDP-N-acetyl-alpha-D-glucosamine = UDP-N-acetyl-3-O-(1-carboxyvinyl)-alpha-D-glucosamine + phosphate. The protein operates within cell wall biogenesis; peptidoglycan biosynthesis. In terms of biological role, cell wall formation. Adds enolpyruvyl to UDP-N-acetylglucosamine. This chain is UDP-N-acetylglucosamine 1-carboxyvinyltransferase, found in Desulforapulum autotrophicum (strain ATCC 43914 / DSM 3382 / VKM B-1955 / HRM2) (Desulfobacterium autotrophicum).